Reading from the N-terminus, the 547-residue chain is Phenylalanine--tRNA ligase beta subunit (547 aa).

One can recognise a B5 domain in the interval 269-344; it reads LDVRFMEVDV…IGYGYENITP (76 aa). Residues Asp322, Asp328, Glu331, and Asp332 each contribute to the Mg(2+) site.

Belongs to the phenylalanyl-tRNA synthetase beta subunit family. Type 2 subfamily. In terms of assembly, tetramer of two alpha and two beta subunits. Mg(2+) is required as a cofactor.

The protein localises to the cytoplasm. The enzyme catalyses tRNA(Phe) + L-phenylalanine + ATP = L-phenylalanyl-tRNA(Phe) + AMP + diphosphate + H(+). The chain is Phenylalanine--tRNA ligase beta subunit from Archaeoglobus fulgidus (strain ATCC 49558 / DSM 4304 / JCM 9628 / NBRC 100126 / VC-16).